A 348-amino-acid chain; its full sequence is Peptide-N(4)-(N-acetyl-beta-glucosaminyl)asparagine amidase (348 aa).

Residues Cys116, Cys119, Cys151, and Cys154 each coordinate Zn(2+). The Nucleophile role is filled by Cys177. Residues His204 and Asp221 contribute to the active site. Glu224 is a binding site for substrate. Residues 311 to 348 (PSATPTKEMQKLKISKTGNKGRISGSAEWKESRGENGK) are disordered. Positions 338–348 (EWKESRGENGK) are enriched in basic and acidic residues.

Belongs to the transglutaminase-like superfamily. PNGase family. Requires Zn(2+) as cofactor.

It is found in the cytoplasm. It carries out the reaction Hydrolysis of an N(4)-(acetyl-beta-D-glucosaminyl)asparagine residue in which the glucosamine residue may be further glycosylated, to yield a (substituted) N-acetyl-beta-D-glucosaminylamine and a peptide containing an aspartate residue.. Functionally, specifically deglycosylates the denatured form of N-linked glycoproteins in the cytoplasm and assists their proteasome-mediated degradation. Cleaves the beta-aspartyl-glucosamine (GlcNAc) of the glycan and the amide side chain of Asn, converting Asn to Asp. Prefers proteins containing high-mannose over those bearing complex type oligosaccharides. Can recognize misfolded proteins in the endoplasmic reticulum that are exported to the cytosol to be destroyed and deglycosylate them, while it has no activity toward native proteins. Deglycosylation is a prerequisite for subsequent proteasome-mediated degradation of some, but not all, misfolded glycoproteins. The chain is Peptide-N(4)-(N-acetyl-beta-glucosaminyl)asparagine amidase (PNG1) from Candida glabrata (strain ATCC 2001 / BCRC 20586 / JCM 3761 / NBRC 0622 / NRRL Y-65 / CBS 138) (Yeast).